Here is a 437-residue protein sequence, read N- to C-terminus: Ribosomal protein uS12 methylthiotransferase RimO (437 aa).

Residues 4–114 (PRVSFVSLGC…VMSAVHEAVP (111 aa)) enclose the MTTase N-terminal domain. The [4Fe-4S] cluster site is built by cysteine 13, cysteine 49, cysteine 78, cysteine 145, cysteine 149, and cysteine 152. The 239-residue stretch at 131 to 369 (LTPRHYAYLK…MAKQQQISTN (239 aa)) folds into the Radical SAM core domain. One can recognise a TRAM domain in the interval 372–437 (KKKVGKRLPV…DAYDLHGIAV (66 aa)).

It belongs to the methylthiotransferase family. RimO subfamily. Requires [4Fe-4S] cluster as cofactor.

It localises to the cytoplasm. It carries out the reaction L-aspartate(89)-[ribosomal protein uS12]-hydrogen + (sulfur carrier)-SH + AH2 + 2 S-adenosyl-L-methionine = 3-methylsulfanyl-L-aspartate(89)-[ribosomal protein uS12]-hydrogen + (sulfur carrier)-H + 5'-deoxyadenosine + L-methionine + A + S-adenosyl-L-homocysteine + 2 H(+). Catalyzes the methylthiolation of an aspartic acid residue of ribosomal protein uS12. This is Ribosomal protein uS12 methylthiotransferase RimO from Brucella anthropi (strain ATCC 49188 / DSM 6882 / CCUG 24695 / JCM 21032 / LMG 3331 / NBRC 15819 / NCTC 12168 / Alc 37) (Ochrobactrum anthropi).